Here is a 398-residue protein sequence, read N- to C-terminus: Acetate kinase (398 aa).

Residue N7 participates in Mg(2+) binding. K14 is a binding site for ATP. R92 contributes to the substrate binding site. The active-site Proton donor/acceptor is D149. ATP is bound by residues 208–212 (HLGNG), 283–285 (DCR), and 331–335 (GIGEN). A Mg(2+)-binding site is contributed by E385.

Belongs to the acetokinase family. Homodimer. It depends on Mg(2+) as a cofactor. Requires Mn(2+) as cofactor.

The protein resides in the cytoplasm. The catalysed reaction is acetate + ATP = acetyl phosphate + ADP. Its pathway is metabolic intermediate biosynthesis; acetyl-CoA biosynthesis; acetyl-CoA from acetate: step 1/2. Functionally, catalyzes the formation of acetyl phosphate from acetate and ATP. Can also catalyze the reverse reaction. The polypeptide is Acetate kinase (Fusobacterium nucleatum subsp. nucleatum (strain ATCC 25586 / DSM 15643 / BCRC 10681 / CIP 101130 / JCM 8532 / KCTC 2640 / LMG 13131 / VPI 4355)).